The following is a 67-amino-acid chain: Large ribosomal subunit protein uL29 (67 aa).

The protein belongs to the universal ribosomal protein uL29 family.

This chain is Large ribosomal subunit protein uL29, found in Wolbachia sp. subsp. Drosophila simulans (strain wRi).